The chain runs to 408 residues: Glutamate N-acetyltransferase (408 aa).

Substrate contacts are provided by threonine 150, lysine 176, threonine 189, glutamate 271, asparagine 403, and threonine 408. Residue threonine 189 is the Nucleophile of the active site.

It belongs to the ArgJ family. In terms of assembly, heterotetramer of two alpha and two beta chains.

The protein localises to the cytoplasm. The catalysed reaction is N(2)-acetyl-L-ornithine + L-glutamate = N-acetyl-L-glutamate + L-ornithine. The protein operates within amino-acid biosynthesis; L-arginine biosynthesis; L-ornithine and N-acetyl-L-glutamate from L-glutamate and N(2)-acetyl-L-ornithine (cyclic): step 1/1. Catalyzes the transfer of the acetyl group from N(2)-acetylornithine to glutamate, forming N-acetylglutamate and L-ornithine. In Methanococcus maripaludis (strain C6 / ATCC BAA-1332), this protein is Glutamate N-acetyltransferase.